Here is a 360-residue protein sequence, read N- to C-terminus: Biotin synthase 2 (360 aa).

A Radical SAM core domain is found at 53–280; that stretch reads RRVKLNFLVN…TAEVRLSGGR (228 aa). [4Fe-4S] cluster contacts are provided by Cys68, Cys72, and Cys75. Cys112, Cys145, Cys205, and Arg275 together coordinate [2Fe-2S] cluster.

Belongs to the radical SAM superfamily. Biotin synthase family. As to quaternary structure, homodimer. The cofactor is [4Fe-4S] cluster. [2Fe-2S] cluster serves as cofactor.

The catalysed reaction is (4R,5S)-dethiobiotin + (sulfur carrier)-SH + 2 reduced [2Fe-2S]-[ferredoxin] + 2 S-adenosyl-L-methionine = (sulfur carrier)-H + biotin + 2 5'-deoxyadenosine + 2 L-methionine + 2 oxidized [2Fe-2S]-[ferredoxin]. It functions in the pathway cofactor biosynthesis; biotin biosynthesis; biotin from 7,8-diaminononanoate: step 2/2. In terms of biological role, catalyzes the conversion of dethiobiotin (DTB) to biotin by the insertion of a sulfur atom into dethiobiotin via a radical-based mechanism. The sequence is that of Biotin synthase 2 from Frankia casuarinae (strain DSM 45818 / CECT 9043 / HFP020203 / CcI3).